Reading from the N-terminus, the 375-residue chain is Alcohol dehydrogenase 1 (375 aa).

At Ser2 the chain carries N-acetylserine. Positions 47, 68, 98, 101, 104, 112, and 175 each coordinate Zn(2+). NAD(+) contacts are provided by residues 200–205 (WSGRVG), Asp224, and Lys229. The residue at position 234 (Lys234) is an N6-succinyllysine. An NAD(+)-binding site is contributed by 293 to 295 (VGV). Lys340 carries the N6-succinyllysine modification. An NAD(+)-binding site is contributed by Arg370.

Belongs to the zinc-containing alcohol dehydrogenase family. Class-I subfamily. In terms of assembly, homodimer. Zn(2+) serves as cofactor.

The protein resides in the cytoplasm. The catalysed reaction is a primary alcohol + NAD(+) = an aldehyde + NADH + H(+). The enzyme catalyses a secondary alcohol + NAD(+) = a ketone + NADH + H(+). This Geomys bursarius (Plains pocket gopher) protein is Alcohol dehydrogenase 1 (ADH1).